The chain runs to 245 residues: 1-(5-phosphoribosyl)-5-[(5-phosphoribosylamino)methylideneamino] imidazole-4-carboxamide isomerase (245 aa).

Asp-10 acts as the Proton acceptor in catalysis. Catalysis depends on Asp-129, which acts as the Proton donor.

Belongs to the HisA/HisF family.

The protein resides in the cytoplasm. It catalyses the reaction 1-(5-phospho-beta-D-ribosyl)-5-[(5-phospho-beta-D-ribosylamino)methylideneamino]imidazole-4-carboxamide = 5-[(5-phospho-1-deoxy-D-ribulos-1-ylimino)methylamino]-1-(5-phospho-beta-D-ribosyl)imidazole-4-carboxamide. Its pathway is amino-acid biosynthesis; L-histidine biosynthesis; L-histidine from 5-phospho-alpha-D-ribose 1-diphosphate: step 4/9. This Parafrankia sp. (strain EAN1pec) protein is 1-(5-phosphoribosyl)-5-[(5-phosphoribosylamino)methylideneamino] imidazole-4-carboxamide isomerase.